The chain runs to 92 residues: Large ribosomal subunit protein bL25 (92 aa).

It belongs to the bacterial ribosomal protein bL25 family. In terms of assembly, part of the 50S ribosomal subunit; part of the 5S rRNA/L5/L18/L25 subcomplex. Contacts the 5S rRNA. Binds to the 5S rRNA independently of L5 and L18.

In terms of biological role, this is one of the proteins that binds to the 5S RNA in the ribosome where it forms part of the central protuberance. The chain is Large ribosomal subunit protein bL25 from Photobacterium damsela subsp. piscicida (Pasteurella piscicida).